Consider the following 842-residue polypeptide: ATP-binding cassette sub-family B member 6 (842 aa).

Over 1–26 (MVTVGNYCEAEGPLGPAWAQNGLSPC) the chain is Lumenal. The segment at 1–205 (MVTVGNYCEA…SGGLFILGLW (205 aa)) is required for the lysosomal targeting. Residues 1–236 (MVTVGNYCEA…RNQAQSTDRT (236 aa)) are required for ATPase activity. Cysteines 8 and 26 form a disulfide. Residues 27-47 (FFFTLVPSTLMALGALALVLV) traverse the membrane as a helical segment. The Cytoplasmic segment spans residues 48–72 (LPCRRRDVPSGTEELFWAADSRVAP). A helical transmembrane segment spans residues 73–93 (YALQLFLATLQVALPLAGLAG). The Lumenal portion of the chain corresponds to 94 to 106 (RVGTARGVRLPGY). The chain crosses the membrane as a helical span at residues 107–127 (LLLASMLGSLASACGLWLLVA). The Cytoplasmic segment spans residues 128-147 (ERRQARQSLAMGVWMKFRHS). Residues 148 to 168 (SGLLLLWTVAFAAENLALVSW) form a helical membrane-spanning segment. Residues 169–185 (NSPQWWWARADLGQQVQ) lie on the Lumenal side of the membrane. Residues 186-206 (FGLWVLRYVISGGLFILGLWA) form a helical membrane-spanning segment. At 207 to 263 (PGLRPQSYTLRVHEADQDVERNQAQSTDRTSTWRDLGRKLRLLSSYLWPRGSPALQF) the chain is on the cytoplasmic side. A helical transmembrane segment spans residues 264–284 (IVLICLGLMGLDRALNVLVPI). The 292-residue stretch at 265–556 (VLICLGLMGL…FGTYYRMIQT (292 aa)) folds into the ABC transmembrane type-1 domain. Topologically, residues 285-305 (FYRDIVNLLTSKAPWSSLAWT) are lumenal. A helical membrane pass occupies residues 306-326 (VTTYVFLKFLQGGGTGSTGFV). Over 327 to 375 (SNLRTFLWIRVQQFTSRGVELRLFSHLHELSLRWHLGRRTGEVLRVVDR) the chain is Cytoplasmic. A helical membrane pass occupies residues 376-396 (GTSSVTGLLSYLVFNIIPTLA). Residue Asp-397 is a topological domain, lumenal. Residues 398–418 (IIIGIIYFSMFFNAWFGLIVF) traverse the membrane as a helical segment. Residues 419-499 (LCMSLYLFLT…SSASLVVLNQ (81 aa)) lie on the Cytoplasmic side of the membrane. The chain crosses the membrane as a helical span at residues 500 to 520 (TQNLVIGLGLLAGSLLCAYFV). The Lumenal segment spans residues 521 to 529 (SEQKLQVGD). A helical membrane pass occupies residues 530 to 550 (FVLFGTYITQLYMPLNWFGTY). Topologically, residues 551–842 (YRMIQTNFID…SEDSKPQDIA (292 aa)) are cytoplasmic. The region spanning 590-824 (IEFENVHFSY…GGVYAEMWQL (235 aa)) is the ABC transporter domain. 623–630 (GPSGAGKS) provides a ligand contact to ATP.

This sequence belongs to the ABC transporter superfamily. ABCB family. Heavy Metal importer (TC 3.A.1.210) subfamily. Homodimer. Post-translationally, N-glycosylated. As to expression, highly expressed in the liver, adrenal glands, and testis.

It is found in the cell membrane. The protein resides in the mitochondrion outer membrane. It localises to the endoplasmic reticulum membrane. Its subcellular location is the golgi apparatus membrane. The protein localises to the endosome membrane. It is found in the lysosome membrane. The protein resides in the late endosome membrane. It localises to the early endosome membrane. Its subcellular location is the secreted. The protein localises to the extracellular exosome. It is found in the mitochondrion. The protein resides in the endosome. It localises to the multivesicular body membrane. Its subcellular location is the melanosome membrane. It catalyses the reaction heme b(in) + ATP + H2O = heme b(out) + ADP + phosphate + H(+). The enzyme catalyses coproporphyrin III(in) + ATP + H2O = coproporphyrin III(out) + ADP + phosphate + H(+). The catalysed reaction is pheophorbide a(in) + ATP + H2O = pheophorbide a(out) + ADP + phosphate + H(+). It carries out the reaction coproporphyrinogen III(in) + ATP + H2O = coproporphyrinogen III(out) + ADP + phosphate + H(+). It catalyses the reaction protoporphyrin IX(in) + ATP + H2O = protoporphyrin IX(out) + ADP + phosphate + H(+). The enzyme catalyses coproporphyrin I(in) + ATP + H2O = coproporphyrin I(out) + ADP + phosphate + H(+). The catalysed reaction is uroporphyrin I(in) + ATP + H2O = uroporphyrin I(out) + ADP + phosphate + H(+). It carries out the reaction uroporphyrin III(in) + ATP + H2O = uroporphyrin III(out) + ADP + phosphate + H(+). In terms of biological role, ATP-dependent transporter that catalyzes the transport of a broad-spectrum of porphyrins from the cytoplasm to the extracellular space through the plasma membrane or into the vesicle lumen. May also function as an ATP-dependent importer of porphyrins from the cytoplasm into the mitochondria, in turn may participate in the de novo heme biosynthesis regulation and in the coordination of heme and iron homeostasis during phenylhydrazine stress. May also play a key role in the early steps of melanogenesis producing PMEL amyloid fibrils. In vitro, it confers to cells a resistance to toxic metal such as arsenic and cadmium and against chemotherapeutics agent such as 5-fluorouracil, SN-38 and vincristin. In addition may play a role in the transition metal homeostasis. The protein is ATP-binding cassette sub-family B member 6 of Mesocricetus auratus (Golden hamster).